The sequence spans 542 residues: Hydroxylamine reductase (542 aa).

[4Fe-4S] cluster-binding residues include cysteine 3, cysteine 6, cysteine 15, and cysteine 21. Hybrid [4Fe-2O-2S] cluster contacts are provided by histidine 243, glutamate 267, cysteine 311, cysteine 398, cysteine 426, cysteine 451, glutamate 485, and lysine 487. Position 398 is a cysteine persulfide (cysteine 398).

Belongs to the HCP family. [4Fe-4S] cluster serves as cofactor. It depends on hybrid [4Fe-2O-2S] cluster as a cofactor.

It is found in the cytoplasm. It carries out the reaction A + NH4(+) + H2O = hydroxylamine + AH2 + H(+). Catalyzes the reduction of hydroxylamine to form NH(3) and H(2)O. This Syntrophobacter fumaroxidans (strain DSM 10017 / MPOB) protein is Hydroxylamine reductase.